Reading from the N-terminus, the 30-residue chain is Cyclotide cter-H (30 aa).

The cyclopeptide (Gly-Asp) cross-link spans 1–30 (GLPCGESCVFIPCITTVVGCSCKNKVCYND). 3 disulfides stabilise this stretch: Cys-4–Cys-20, Cys-8–Cys-22, and Cys-13–Cys-27.

In terms of processing, contains 3 disulfide bonds. Post-translationally, this is a cyclic peptide.

Functionally, probably participates in a plant defense mechanism. This chain is Cyclotide cter-H, found in Clitoria ternatea (Butterfly pea).